The following is a 921-amino-acid chain: MKTLSPTGYGLLLVLPLLLAVLQSTTAHKNDINIYSLTVDSKVSSRFAHTVVTSRVVNKGSAVQEATFQMELPKKAFITNFSMIIDGVTYPGNIKEKAAAQEQYSAVARGESAGLVRATGRKTEQFQVAVSVAPAAKVTFELVYEELLARHLGVYELLLKIQPQQLVKHLQMDIHIFEPQGISFLETESTFMTNELAEALTISQNKTKAHIRFKPTLSQQQKSPEQQETVLDGNFIVRYDVNRTVTGGSIQIENGYFVHYFAPEVWSAIPKNVIFVIDTSGSMRGRKIQQTREALIKILGDLGSRDQFNLVSFSGEAPRRRAVAASAENVEEAKSYAAEIHAQGGTNINDAMLMAVQLLERANREELLPARSVTFIILLTDGDPTVGETNPSKIQKNVREAIDGQHSLFCLGFGFDVPYAFLEKMALENGGLARRIYEDSDSALQLEDFYQEVANPLLRLVAFEYPSNAVEEVTQDNFRLFFKGSELVVAGKLRDQSPDVLSAKVRGQLHMENVTFVMESRVAEQEAEFLSPKYIFHSFMERLWAYLTIQQLLAQTVSASDAEKKALEARALSLSLNYSFVTPLTSMVITKPEGQEQSQVAEKPVENGNRQGNTHSGHSSFQFHSVGDRTSRLTGGSSVDPVFSHRRGWKGQAQGFEKMSYLPPRLGPPGPLQPTRFSHPFSRITLDRVLPEVLSVPDETSHDMDSRIIGATIPPPPARIQAPSVILPLPGQSVDQLCVDLKHSQGPVKLLSDPGQGVEVTGHYEREKARFSWIEVTFKHPPLQVRASLEHIVVIRNRQSSAYKWKETLYSVMPGLKITMDKAGLLLLSSPNRVTIGLLSWDGPGKGLRLLLRDTDHFSSQISGTFGQFYQDVVWGPPAAADDSKRTVTVQGHDHSATRELKLDYQEGSPGKEISCWTVVL.

Residues 1–27 (MKTLSPTGYGLLLVLPLLLAVLQSTTA) form the signal peptide. In terms of domain architecture, VIT spans 28–146 (HKNDINIYSL…KVTFELVYEE (119 aa)). N-linked (GlcNAc...) asparagine glycosylation is found at asparagine 80, asparagine 205, and asparagine 242. The 159-residue stretch at 270-428 (PKNVIFVIDT…YAFLEKMALE (159 aa)) folds into the VWFA domain. N-linked (GlcNAc...) asparagine glycosylation is found at asparagine 513 and asparagine 577. Residues 591 to 646 (KPEGQEQSQVAEKPVENGNRQGNTHSGHSSFQFHSVGDRTSRLTGGSSVDPVFSHR) form a disordered region. Over residues 608-623 (GNRQGNTHSGHSSFQF) the composition is skewed to polar residues. Residue threonine 712 is glycosylated (O-linked (GalNAc...) threonine). Cysteine 738 and cysteine 916 are disulfide-bonded.

It belongs to the ITIH family. In terms of assembly, interacts (via C-terminus) with DNAJC1 (via SANT 2 domain). Post-translationally, appears to be both N- and O-glycosylated. Cleaved by plasma kallikrein to yield 55- and 25-kDa fragments. As to expression, liver specific.

Its subcellular location is the secreted. Its function is as follows. Type II acute-phase protein (APP) involved in inflammatory responses to trauma. May also play a role in liver development or regeneration. This is Inter-alpha-trypsin inhibitor heavy chain H4 (ITIH4) from Sus scrofa (Pig).